We begin with the raw amino-acid sequence, 169 residues long: Crossover junction endodeoxyribonuclease RuvC (169 aa).

Residues aspartate 11, glutamate 71, and aspartate 143 contribute to the active site. Positions 11, 71, and 143 each coordinate Mg(2+).

The protein belongs to the RuvC family. As to quaternary structure, homodimer which binds Holliday junction (HJ) DNA. The HJ becomes 2-fold symmetrical on binding to RuvC with unstacked arms; it has a different conformation from HJ DNA in complex with RuvA. In the full resolvosome a probable DNA-RuvA(4)-RuvB(12)-RuvC(2) complex forms which resolves the HJ. The cofactor is Mg(2+).

The protein resides in the cytoplasm. The enzyme catalyses Endonucleolytic cleavage at a junction such as a reciprocal single-stranded crossover between two homologous DNA duplexes (Holliday junction).. In terms of biological role, the RuvA-RuvB-RuvC complex processes Holliday junction (HJ) DNA during genetic recombination and DNA repair. Endonuclease that resolves HJ intermediates. Cleaves cruciform DNA by making single-stranded nicks across the HJ at symmetrical positions within the homologous arms, yielding a 5'-phosphate and a 3'-hydroxyl group; requires a central core of homology in the junction. The consensus cleavage sequence is 5'-(A/T)TT(C/G)-3'. Cleavage occurs on the 3'-side of the TT dinucleotide at the point of strand exchange. HJ branch migration catalyzed by RuvA-RuvB allows RuvC to scan DNA until it finds its consensus sequence, where it cleaves and resolves the cruciform DNA. This chain is Crossover junction endodeoxyribonuclease RuvC, found in Rhizobium etli (strain ATCC 51251 / DSM 11541 / JCM 21823 / NBRC 15573 / CFN 42).